Here is a 573-residue protein sequence, read N- to C-terminus: Putative adenine deaminase PTO1085 (573 aa).

The protein belongs to the metallo-dependent hydrolases superfamily. Adenine deaminase family.

The catalysed reaction is adenine + H2O + H(+) = hypoxanthine + NH4(+). The chain is Putative adenine deaminase PTO1085 from Picrophilus torridus (strain ATCC 700027 / DSM 9790 / JCM 10055 / NBRC 100828 / KAW 2/3).